The sequence spans 78 residues: Large ribosomal subunit protein bL28 (78 aa).

This sequence belongs to the bacterial ribosomal protein bL28 family.

The protein is Large ribosomal subunit protein bL28 of Synechococcus sp. (strain JA-2-3B'a(2-13)) (Cyanobacteria bacterium Yellowstone B-Prime).